A 120-amino-acid polypeptide reads, in one-letter code: Large ribosomal subunit protein bL19 (120 aa).

The protein belongs to the bacterial ribosomal protein bL19 family.

Functionally, this protein is located at the 30S-50S ribosomal subunit interface and may play a role in the structure and function of the aminoacyl-tRNA binding site. This is Large ribosomal subunit protein bL19 from Renibacterium salmoninarum (strain ATCC 33209 / DSM 20767 / JCM 11484 / NBRC 15589 / NCIMB 2235).